A 357-amino-acid polypeptide reads, in one-letter code: GDP-mannose transporter 2 (357 aa).

Over 1-43 the chain is Cytoplasmic; sequence MASTRNGISKDELLPTYELQSQRDVENSGSVTSFASKISNNAA. A helical membrane pass occupies residues 44–64; that stretch reads AAVLAYCLSSISMTLVNKYVV. Residues 65–68 lie on the Lumenal side of the membrane; the sequence is SGAS. Residues 69–89 form a helical membrane-spanning segment; the sequence is WNLSFLYLAIQSFIGTVAIMV. At 90–107 the chain is on the cytoplasmic side; that stretch reads CKKAGLIQNLGLFDLKKA. A helical transmembrane segment spans residues 108 to 128; the sequence is QTWLPISLLLVGMIYTGNKAL. Position 129 (Q129) is a topological domain, lumenal. A helical membrane pass occupies residues 130 to 150; sequence FLSVPVYTIFKNLTIIVIAYG. Topologically, residues 151–161 are cytoplasmic; sequence EVFMVGGSVKP. Residues 162–182 traverse the membrane as a helical segment; the sequence is LALLSFGLMVLSSVVAAWADI. Over 183 to 196 the chain is Lumenal; that stretch reads QIATAATAKASSDS. The helical transmembrane segment at 197 to 217 threads the bilayer; that stretch reads AVATLSALNAGYAWMGTNVVF. Residues 218–238 lie on the Cytoplasmic side of the membrane; sequence SASYALGMRRVIKKTNFDNWD. A helical membrane pass occupies residues 239–259; sequence VMFYNNLLSVPILLLSSLLVE. Residues 260–277 lie on the Lumenal side of the membrane; it reads DWSSENLQRNFPAESRQS. Residues 278–298 traverse the membrane as a helical segment; sequence LVIGIFYSGVAAIFISYCTAW. Topologically, residues 299 to 306 are cytoplasmic; sequence CVRATSST. Residues 307–327 traverse the membrane as a helical segment; sequence TYAMVGALNKLPLAVAGIVFF. Residues 328-332 lie on the Lumenal side of the membrane; the sequence is AAPVT. A helical transmembrane segment spans residues 333–352; sequence FGSVSAIVLGFISGLVYTWA. At 353 to 357 the chain is on the cytoplasmic side; the sequence is KSTGA.

It belongs to the TPT transporter family. SLC35D subfamily. In terms of assembly, homooligomer.

Its subcellular location is the golgi apparatus membrane. It localises to the cytoplasmic vesicle membrane. It is found in the endoplasmic reticulum membrane. Involved in the import of GDP-mannose from the cytoplasm into the Golgi lumen. The protein is GDP-mannose transporter 2 (gmt2) of Emericella nidulans (strain FGSC A4 / ATCC 38163 / CBS 112.46 / NRRL 194 / M139) (Aspergillus nidulans).